The following is a 662-amino-acid chain: Probable quinol oxidase subunit 1 (662 aa).

The next 2 membrane-spanning stretches (helical) occupy residues 14–34 (WMITMAQIGAPFLVIGLIAVI) and 58–78 (VMYLICAVLMFVRGGIDALLI). His-102 provides a ligand contact to Fe(II)-heme a. Helical transmembrane passes span 103–123 (GVIMIIFMAMPFIFGLWNIVV), 140–160 (VSFWLFFAGMILFNLSFIIGG), 187–207 (IAIQISGLGTLATGINFFVTI), 228–248 (FITTLIVILAFPPLTVALALM), 273–293 (FFWVWGHPEVYIVILPAFGIY), 311–331 (MVWATAGIAFLSFLVWVHHFF), 336–356 (GALINSFFSISTMLIGIPTGV), and 376–396 (MLFSLAFIPNFLLGGVTGVML). Residues His-279, Tyr-283, His-328, and His-329 each contribute to the Cu cation site. A cross-link (1'-histidyl-3'-tyrosine (His-Tyr)) is located at residues 279-283 (HPEVY). Residue His-414 coordinates heme a3. Helical transmembrane passes span 415-435 (FHYTLVTGVVFACLAGLIFWY), 451-471 (CFWFFMIGFNVCFLPQFILGL), 493-513 (ISTIGALLMAIGFLFLVVSIV), 587-604 (PVGFWIGIFMTIGGFFLI), and 608-627 (VIPALICLFGIFGTMIYRSF). His-416 provides a ligand contact to Fe(II)-heme a.

This sequence belongs to the heme-copper respiratory oxidase family. Cu cation is required as a cofactor. It depends on ferriheme a as a cofactor. The cofactor is Heme A3..

It localises to the cell membrane. It carries out the reaction 2 a quinol + O2 = 2 a quinone + 2 H2O. Its pathway is energy metabolism; oxidative phosphorylation. In terms of biological role, catalyzes quinol oxidation with the concomitant reduction of oxygen to water. The chain is Probable quinol oxidase subunit 1 (qoxB) from Staphylococcus aureus (strain COL).